The sequence spans 1068 residues: Rho family-interacting cell polarization regulator 2 (1068 aa).

Serine 21 and serine 37 each carry phosphoserine; in isoform. The segment at 45–73 is disordered; that stretch reads LKKPQAKLKKMHNLGHKNNNPPKEPQPKR. Residues 48 to 59 are compositionally biased toward basic residues; it reads PQAKLKKMHNLG. The tract at residues 55–113 is involved in cell filopodia formation; sequence MHNLGHKNNNPPKEPQPKRVEEVYRALKNGLDEYLEVHQTELDKLTAQLKDMKRNSRLG. Residues 83–112 are a coiled coil; it reads NGLDEYLEVHQTELDKLTAQLKDMKRNSRL. At serine 341 the chain carries Phosphoserine; in isoform 2. Positions 474–491 are enriched in polar residues; the sequence is QNEGMDDTSSASSRNSLG. Residues 474–524 are disordered; sequence QNEGMDDTSSASSRNSLGEGQEPKSHLKEEDPEEPRKPASAPSEACRRQSS. Residues 494 to 510 show a composition bias toward basic and acidic residues; the sequence is QEPKSHLKEEDPEEPRK. Serine 523 is subject to Phosphoserine; in isoform 2. Serine 573 carries the phosphoserine modification. The residue at position 585 (serine 585) is a Phosphoserine; in isoform 2. Positions 768–793 form a coiled coil; sequence VARSLLEKLSRQIQVMEKLAAVSDEN.

It belongs to the RIPOR family. In terms of assembly, homooligomer; homooligomerization is regulated by RHOC and leads to the formation of concatemers through the association of N- and C-termini. Interacts with 14-3-3 proteins; these interactions occur during myogenic cell differentiation. Interacts with HDAC6; this interaction occurs during early myogenic differentiation and prevents HDAC6 to deacetylate tubulin. Interacts with DYSF; this interaction occurs during early myogenic differentiation. Interacts with MYOF. Interacts with RHOC. Isoform 1 and isoform 2 interact (via active GTP- or inactive GDP-bound forms) with RHOA; these interactions are direct, block the loading of GTP to RHOA and decrease upon chemokine CCL19 stimulation in primary T lymphocytes. Isoform 2 interacts (phosphorylated form) with HDAC6; this interaction induces T cell proliferation arrest. Isoform 2 interacts (phosphorylated form) with 14-3-3 proteins; these interactions induces T cell proliferation arrest. Isoform 2 interacts with 14-3-3 proteins. Isoform 2 interacts (via phosphorylated form) with YWHAB; this interaction occurs in a chemokine-dependent manner and does not compete for binding of RIPOR2 with RHOA nor blocks inhibition of RIPOR2-mediated RHOA activity. Isoform 2 interacts with YWHAE. Isoform 2 interacts with YWHAQ. In terms of processing, phosphorylated. Isoform 2 is phosphorylated in T cells. Chemokine-induced phosphorylation of isoform 2 in neutrophils occurs in a PKC- and AKT-dependent manner, resulting in RIPOR2 interaction with YWHAB and stabilization. Isoform 2 is phosphorylated by PKCA, AKT1 and MAPKAPK1A; in vitro. Post-translationally, acetylated during myogenic differentiation. As to expression, expressed in primary fetal mononuclear myoblast. Expressed strongly in naive T lymphocytes. Expressed weakly in activated T lymphocytes (at protein level). Expressed in blood cells and adult tissues of hematopoietic origin, such as the secondary lymphoid organs. Expressed in cytotrophoblast.

The protein resides in the cytoplasm. The protein localises to the cytoskeleton. It localises to the cell projection. It is found in the filopodium. Its subcellular location is the stereocilium. The protein resides in the stereocilium membrane. The protein localises to the apical cell membrane. In terms of biological role, acts as an inhibitor of the small GTPase RHOA and plays several roles in the regulation of myoblast and hair cell differentiation, lymphocyte T proliferation and neutrophil polarization. Inhibits chemokine-induced T lymphocyte responses, such as cell adhesion, polarization and migration. Involved also in the regulation of neutrophil polarization, chemotaxis and adhesion. Required for normal development of inner and outer hair cell stereocilia within the cochlea of the inner ear. Plays a role for maintaining the structural organization of the basal domain of stereocilia. Involved in mechanosensory hair cell function. Required for normal hearing. Acts as an inhibitor of the small GTPase RHOA. Plays a role in fetal mononuclear myoblast differentiation by promoting filopodia and myotube formation. Maintains naive T lymphocytes in a quiescent state. This Homo sapiens (Human) protein is Rho family-interacting cell polarization regulator 2 (RIPOR2).